A 190-amino-acid chain; its full sequence is Threonylcarbamoyl-AMP synthase (190 aa).

The region spanning 7–190 (LSSLIKCIRK…IVNGKLIRYV (184 aa)) is the YrdC-like domain.

It belongs to the SUA5 family. TsaC subfamily.

Its subcellular location is the cytoplasm. It carries out the reaction L-threonine + hydrogencarbonate + ATP = L-threonylcarbamoyladenylate + diphosphate + H2O. In terms of biological role, required for the formation of a threonylcarbamoyl group on adenosine at position 37 (t(6)A37) in tRNAs that read codons beginning with adenine. Catalyzes the conversion of L-threonine, HCO(3)(-)/CO(2) and ATP to give threonylcarbamoyl-AMP (TC-AMP) as the acyladenylate intermediate, with the release of diphosphate. This Buchnera aphidicola subsp. Schizaphis graminum (strain Sg) protein is Threonylcarbamoyl-AMP synthase.